Here is a 165-residue protein sequence, read N- to C-terminus: Large ribosomal subunit protein uL10 (165 aa).

This sequence belongs to the universal ribosomal protein uL10 family. Part of the ribosomal stalk of the 50S ribosomal subunit. The N-terminus interacts with L11 and the large rRNA to form the base of the stalk. The C-terminus forms an elongated spine to which L12 dimers bind in a sequential fashion forming a multimeric L10(L12)X complex.

Functionally, forms part of the ribosomal stalk, playing a central role in the interaction of the ribosome with GTP-bound translation factors. In Sodalis glossinidius (strain morsitans), this protein is Large ribosomal subunit protein uL10.